A 219-amino-acid polypeptide reads, in one-letter code: Large ribosomal subunit protein uL3 (219 aa).

Positions 124–154 (FSGSIKRHNQSEGPKSHGSRYHRRPGSMGPI) are disordered.

Belongs to the universal ribosomal protein uL3 family. In terms of assembly, part of the 50S ribosomal subunit. Forms a cluster with proteins L14 and L19.

Its function is as follows. One of the primary rRNA binding proteins, it binds directly near the 3'-end of the 23S rRNA, where it nucleates assembly of the 50S subunit. This is Large ribosomal subunit protein uL3 from Phytoplasma mali (strain AT).